Here is a 125-residue protein sequence, read N- to C-terminus: S-adenosylmethionine decarboxylase proenzyme (125 aa).

S71 acts as the Schiff-base intermediate with substrate; via pyruvic acid in catalysis. Position 71 is a pyruvic acid (Ser); by autocatalysis (S71). Catalysis depends on H76, which acts as the Proton acceptor; for processing activity. C91 serves as the catalytic Proton donor; for catalytic activity.

The protein belongs to the prokaryotic AdoMetDC family. Type 1 subfamily. Heterotetramer of two alpha and two beta chains arranged as a dimer of alpha/beta heterodimers. Requires pyruvate as cofactor. Is synthesized initially as an inactive proenzyme. Formation of the active enzyme involves a self-maturation process in which the active site pyruvoyl group is generated from an internal serine residue via an autocatalytic post-translational modification. Two non-identical subunits are generated from the proenzyme in this reaction, and the pyruvate is formed at the N-terminus of the alpha chain, which is derived from the carboxyl end of the proenzyme. The post-translation cleavage follows an unusual pathway, termed non-hydrolytic serinolysis, in which the side chain hydroxyl group of the serine supplies its oxygen atom to form the C-terminus of the beta chain, while the remainder of the serine residue undergoes an oxidative deamination to produce ammonia and the pyruvoyl group blocking the N-terminus of the alpha chain.

The catalysed reaction is S-adenosyl-L-methionine + H(+) = S-adenosyl 3-(methylsulfanyl)propylamine + CO2. Its pathway is amine and polyamine biosynthesis; S-adenosylmethioninamine biosynthesis; S-adenosylmethioninamine from S-adenosyl-L-methionine: step 1/1. Catalyzes the decarboxylation of S-adenosylmethionine to S-adenosylmethioninamine (dcAdoMet), the propylamine donor required for the synthesis of the polyamines spermine and spermidine from the diamine putrescine. In Pyrobaculum aerophilum (strain ATCC 51768 / DSM 7523 / JCM 9630 / CIP 104966 / NBRC 100827 / IM2), this protein is S-adenosylmethionine decarboxylase proenzyme.